The sequence spans 95 residues: Large ribosomal subunit protein uL23 (95 aa).

This sequence belongs to the universal ribosomal protein uL23 family. As to quaternary structure, part of the 50S ribosomal subunit. Contacts protein L29, and trigger factor when it is bound to the ribosome.

Functionally, one of the early assembly proteins it binds 23S rRNA. One of the proteins that surrounds the polypeptide exit tunnel on the outside of the ribosome. Forms the main docking site for trigger factor binding to the ribosome. The sequence is that of Large ribosomal subunit protein uL23 from Fusobacterium nucleatum subsp. nucleatum (strain ATCC 25586 / DSM 15643 / BCRC 10681 / CIP 101130 / JCM 8532 / KCTC 2640 / LMG 13131 / VPI 4355).